Here is a 214-residue protein sequence, read N- to C-terminus: MANRIDHEYDYLFKIVLIGDSGVGKSNILSRFTRNEFCLESKSTIGVEFATRTLQVEGKTVKAQIWDTAGQERYRAITSAYYRGAVGALLVYDITKRQTFENVLRWLRELRDHADSNIVIMMAGNKSDLNHLRSVADEDGRSLAEKEGLSFLETSALEATNIEKAFQTILSEIYHIISKKALAAQEAAGNLPGQGTAINISDSSATNRKGCCST.

19–26 serves as a coordination point for GTP; that stretch reads GDSGVGKS. Residues 41–49 carry the Effector region motif; the sequence is SKSTIGVEF. GTP-binding positions include 67-71, 125-128, and 155-156; these read DTAGQ, NKSD, and SA. Residues C211 and C212 are each lipidated (S-geranylgeranyl cysteine).

The protein belongs to the small GTPase superfamily. Rab family. Expressed in root tips.

Its subcellular location is the endosome membrane. It localises to the golgi apparatus. The protein localises to the trans-Golgi network membrane. In terms of biological role, intracellular vesicle trafficking and protein transport. This chain is Ras-related protein RABA2b (RABA2B), found in Arabidopsis thaliana (Mouse-ear cress).